Consider the following 317-residue polypeptide: Ribosomal protein L11 methyltransferase (317 aa).

Thr158, Gly179, Asp201, and Asn244 together coordinate S-adenosyl-L-methionine.

It belongs to the methyltransferase superfamily. PrmA family.

It is found in the cytoplasm. It carries out the reaction L-lysyl-[protein] + 3 S-adenosyl-L-methionine = N(6),N(6),N(6)-trimethyl-L-lysyl-[protein] + 3 S-adenosyl-L-homocysteine + 3 H(+). In terms of biological role, methylates ribosomal protein L11. This is Ribosomal protein L11 methyltransferase from Streptococcus pyogenes serotype M1.